The following is a 551-amino-acid chain: MKIRHWSALSLFVLPALAQAEALTGEVHRQPLNIQAIVMFLLFVGGTLYITYWASKRTRSRQDYYTAGGRITGFQNGLAIAGDYMSAASFLGISALVYASGYDGLIYSIGFLIGWPIILFLIAERLRNLGRYTFADVASYRLQQRPIRTLSACGSLVVVALYLIAQMVGAGKLIQLLFGLNYHVAVVLVGILMVLYVLFGGMLATTWVQIIKAVMLLSGATFMAIMVMKSVNFNFNTLFSEAVKVHPKGLSIMSPGGLVSDPISALSLGLALMFGTAGLPHILMRFFTVSDAKEARKSVFYATGFIGYFYILTFIIGFGAILLVGPNQTFKDAAGALLGGNNMAAVHLANAVGGSFFLGFISAVAFATILAVVAGLTLAGASAVSHDLYASVIKKGKANERDELRVSKITVIILGIVAIGLGILFENQNIAFMVGLAFSIAASCNFPIIIISMYWDKLTTRGAMIGGWLGLSTAVILMILGPTIWVTILGHEKPIYPYEYPALFSMIAAFVGTWFFSITDNSETGKQERLLFKSQFVRSQTGLGASKGGAH.

A run of 14 helical transmembrane segments spans residues 5-25, 34-54, 77-97, 104-124, 150-170, 184-204, 207-227, 263-283, 304-324, 356-376, 406-426, 430-450, 469-489, and 498-518; these read HWSALSLFVLPALAQAEALTG, IQAIVMFLLFVGGTLYITYWA, GLAIAGDYMSAASFLGISALV, GLIYSIGFLIGWPIILFLIAE, LSACGSLVVVALYLIAQMVGA, VAVVLVGILMVLYVLFGGMLA, WVQIIKAVMLLSGATFMAIMV, ISALSLGLALMFGTAGLPHIL, GFIGYFYILTFIIGFGAILLV, FFLGFISAVAFATILAVVAGL, VSKITVIILGIVAIGLGILFE, IAFMVGLAFSIAASCNFPIII, LGLSTAVILMILGPTIWVTIL, and YEYPALFSMIAAFVGTWFFSI.

Belongs to the sodium:solute symporter (SSF) (TC 2.A.21) family.

Its subcellular location is the cell inner membrane. Transports acetate. In Yersinia pestis bv. Antiqua (strain Antiqua), this protein is Cation/acetate symporter ActP.